A 356-amino-acid chain; its full sequence is Phosphate acyltransferase (356 aa).

The protein belongs to the PlsX family. As to quaternary structure, homodimer. Probably interacts with PlsY.

Its subcellular location is the cytoplasm. The enzyme catalyses a fatty acyl-[ACP] + phosphate = an acyl phosphate + holo-[ACP]. The protein operates within lipid metabolism; phospholipid metabolism. Its function is as follows. Catalyzes the reversible formation of acyl-phosphate (acyl-PO(4)) from acyl-[acyl-carrier-protein] (acyl-ACP). This enzyme utilizes acyl-ACP as fatty acyl donor, but not acyl-CoA. This is Phosphate acyltransferase from Shigella boydii serotype 4 (strain Sb227).